A 315-amino-acid polypeptide reads, in one-letter code: Ribosomal large subunit pseudouridine synthase D (315 aa).

The S4 RNA-binding domain occupies 18–87; the sequence is KRLDQILSKL…LPQNIALNTI (70 aa). Asp139 is an active-site residue.

It belongs to the pseudouridine synthase RluA family.

It is found in the cytoplasm. The enzyme catalyses uridine(1911/1915/1917) in 23S rRNA = pseudouridine(1911/1915/1917) in 23S rRNA. Responsible for synthesis of pseudouridine from uracil at positions 1911, 1915 and 1917 in 23S ribosomal RNA. This is Ribosomal large subunit pseudouridine synthase D (rluD) from Buchnera aphidicola subsp. Schizaphis graminum (strain Sg).